The following is a 91-amino-acid chain: Conotoxin Im9.1 (91 aa).

A signal peptide spans 1 to 23 (MSKVGVVPLIFLVLLSIAALQNG). The propeptide occupies 24-55 (DDPRRQRDEKQSPQGDILRSTLTKYSYNIQRR). Disulfide bonds link Cys56-Cys72, Cys63-Cys83, and Cys66-Cys86.

This sequence belongs to the conotoxin M superfamily. In terms of tissue distribution, expressed by the venom duct.

The protein resides in the secreted. Probable neurotoxin. This Conus imperialis (Imperial cone) protein is Conotoxin Im9.1.